Consider the following 356-residue polypeptide: Heat-inducible transcription repressor HrcA (356 aa).

The protein belongs to the HrcA family.

Negative regulator of class I heat shock genes (grpE-dnaK-dnaJ and groELS operons). Prevents heat-shock induction of these operons. The polypeptide is Heat-inducible transcription repressor HrcA (Gluconobacter oxydans (strain 621H) (Gluconobacter suboxydans)).